A 299-amino-acid polypeptide reads, in one-letter code: tRNA dimethylallyltransferase (299 aa).

Residue Gly13–Thr20 participates in ATP binding. Thr15 to Thr20 contacts substrate. An interaction with substrate tRNA region spans residues Asp38–Gln41.

It belongs to the IPP transferase family. In terms of assembly, monomer. It depends on Mg(2+) as a cofactor.

The enzyme catalyses adenosine(37) in tRNA + dimethylallyl diphosphate = N(6)-dimethylallyladenosine(37) in tRNA + diphosphate. Catalyzes the transfer of a dimethylallyl group onto the adenine at position 37 in tRNAs that read codons beginning with uridine, leading to the formation of N6-(dimethylallyl)adenosine (i(6)A). This chain is tRNA dimethylallyltransferase, found in Prochlorococcus marinus (strain MIT 9515).